The chain runs to 165 residues: Choriogonadotropin subunit beta 7 (165 aa).

The first 20 residues, 1-20 (MEMFQGLLLLLLLSMGGTWA), serve as a signal peptide directing secretion. Cystine bridges form between cysteine 29/cysteine 77, cysteine 43/cysteine 92, cysteine 46/cysteine 130, cysteine 54/cysteine 108, cysteine 58/cysteine 110, and cysteine 113/cysteine 120. N-linked (GlcNAc...) asparagine glycans are attached at residues asparagine 33 and asparagine 50. The interval 131-165 (DDPRFQASSSSKAPPPSLPSPSRLPGPSDTPILPQ) is disordered. O-linked (GalNAc...) serine glycans are attached at residues serine 141, serine 147, serine 152, and serine 158. A compositionally biased stretch (pro residues) spans 143–154 (APPPSLPSPSRL).

Belongs to the glycoprotein hormones subunit beta family. In terms of assembly, heterodimer of a common alpha chain identical in LH, FSH, TSH and HCG and a unique beta chain distinct in each of the hormones and confers receptor and biological specificity. High expression in the placenta throughout pregnancy.

It is found in the secreted. Its function is as follows. Beta subunit of the human chorionic gonadotropin (hCG). hCG is a complex glycoprotein composed of two glycosylated subunits alpha and beta which are non-covalently associated. The alpha subunit is identical to those in the pituitary gonadotropin hormones (LH, FSH and TSH). The beta subunits are distinct in each of the hormones and confer receptor and biological specificity. Has an essential role for pregnancy and maternal adaptation. Stimulates the ovaries to synthesize the steroids that are essential for the maintenance of pregnancy. The protein is Choriogonadotropin subunit beta 7 of Homo sapiens (Human).